A 183-amino-acid chain; its full sequence is Ferritin heavy chain (183 aa).

Met1 carries the N-acetylmethionine modification. N-acetylthreonine; in Ferritin heavy chain, N-terminally processed is present on Thr2. The region spanning 11–160 (QNYHQDSEAA…DHVTNLRKMG (150 aa)) is the Ferritin-like diiron domain. Fe cation is bound by residues Glu28, Glu63, His66, Glu108, and Gln142. Phosphoserine occurs at positions 179 and 183.

The protein belongs to the ferritin family. In terms of assembly, oligomer of 24 subunits. There are two types of subunits: L (light) chain and H (heavy) chain. The major chain can be light or heavy, depending on the species and tissue type. The functional molecule forms a roughly spherical shell with a diameter of 12 nm and contains a central cavity into which the insoluble mineral iron core is deposited. Interacts with NCOA4; NCOA4 promotes targeting of the iron-binding ferritin complex to autolysosomes following starvation or iron depletion.

It localises to the cytoplasm. Its subcellular location is the lysosome. The protein resides in the cytoplasmic vesicle. The protein localises to the autophagosome. The enzyme catalyses 4 Fe(2+) + O2 + 4 H(+) = 4 Fe(3+) + 2 H2O. Its function is as follows. Stores iron in a soluble, non-toxic, readily available form. Important for iron homeostasis. Has ferroxidase activity. Iron is taken up in the ferrous form and deposited as ferric hydroxides after oxidation. Also plays a role in delivery of iron to cells. Mediates iron uptake in capsule cells of the developing kidney. Delivery to lysosomes is mediated by the cargo receptor NCOA4 for autophagic degradation and release of iron. The protein is Ferritin heavy chain (FTH1) of Felis catus (Cat).